Consider the following 78-residue polypeptide: ATP synthase subunit a (78 aa).

Residues 34–54 (LTNIGLYLTIGIFLILTYSLL) form a helical membrane-spanning segment.

The protein belongs to the ATPase A chain family. In terms of assembly, F-type ATPases have 2 components, CF(1) - the catalytic core - and CF(0) - the membrane proton channel. CF(1) has five subunits: alpha(3), beta(3), gamma(1), delta(1), epsilon(1). CF(0) has three main subunits: a, b and c.

Its subcellular location is the mitochondrion inner membrane. In terms of biological role, mitochondrial membrane ATP synthase (F(1)F(0) ATP synthase or Complex V) produces ATP from ADP in the presence of a proton gradient across the membrane which is generated by electron transport complexes of the respiratory chain. F-type ATPases consist of two structural domains, F(1) - containing the extramembraneous catalytic core and F(0) - containing the membrane proton channel, linked together by a central stalk and a peripheral stalk. During catalysis, ATP synthesis in the catalytic domain of F(1) is coupled via a rotary mechanism of the central stalk subunits to proton translocation. Key component of the proton channel; it may play a direct role in the translocation of protons across the membrane. In Aspergillus amstelodami, this protein is ATP synthase subunit a (atp6).